Consider the following 191-residue polypeptide: Prostaglandin-H2 D-isomerase (191 aa).

Residues 1 to 24 form the signal peptide; sequence MAALHTLWMGLVLLGVLGVLQTQA. Q25 carries the post-translational modification Pyrrolidone carboxylic acid. Residue N51 is glycosylated (N-linked (GlcNAc...) asparagine). The Nucleophile role is filled by C65. N78 is a glycosylation site (N-linked (GlcNAc...) asparagine). A disulfide bridge links C89 with C186.

It belongs to the calycin superfamily. Lipocalin family. As to quaternary structure, monomer.

It is found in the rough endoplasmic reticulum. The protein resides in the nucleus membrane. Its subcellular location is the golgi apparatus. The protein localises to the cytoplasm. It localises to the perinuclear region. It is found in the secreted. The enzyme catalyses prostaglandin H2 = prostaglandin D2. In terms of biological role, catalyzes the conversion of PGH2 to PGD2, a prostaglandin involved in smooth muscle contraction/relaxation and a potent inhibitor of platelet aggregation. Involved in a variety of CNS functions, such as sedation, NREM sleep and PGE2-induced allodynia, and may have an anti-apoptotic role in oligodendrocytes. Binds small non-substrate lipophilic molecules, including biliverdin, bilirubin, retinal, retinoic acid and thyroid hormone, and may act as a scavenger for harmful hydrophobic molecules and as a secretory retinoid and thyroid hormone transporter. Possibly involved in development and maintenance of the blood-brain, blood-retina, blood-aqueous humor and blood-testis barrier. It is likely to play important roles in both maturation and maintenance of the central nervous system and male reproductive system. Involved in PLA2G3-dependent maturation of mast cells. PLA2G3 is secreted by immature mast cells and acts on nearby fibroblasts upstream to PTDGS to synthesize PGD2, which in turn promotes mast cell maturation and degranulation via PTGDR. The protein is Prostaglandin-H2 D-isomerase (PTGDS) of Ursus arctos (Brown bear).